A 238-amino-acid polypeptide reads, in one-letter code: Ras association domain-containing protein 3 (238 aa).

Ser-2 is subject to N-acetylserine. The interval 26–48 (RAPQGKPRSGQQDVEKEKETHSY) is disordered. Residues 38 to 48 (DVEKEKETHSY) are compositionally biased toward basic and acidic residues. The 108-residue stretch at 79 to 186 (YTGFIKVQME…TLSFVLREHE (108 aa)) folds into the Ras-associating domain. The region spanning 187–234 (IGEWEAFSLPELQNFLRILDKEEDEQLQNLKRRYTAYRQKLEEALREV) is the SARAH domain.

In terms of tissue distribution, widely expressed.

It localises to the cytoplasm. The protein localises to the cytoskeleton. The polypeptide is Ras association domain-containing protein 3 (RASSF3) (Homo sapiens (Human)).